Here is a 95-residue protein sequence, read N- to C-terminus: MSSRNQRSRITSSFFVSFFTRTILLLLILLLGFCNGARTNTNVFNSKPHKKHNDAVSSSTKQFLGFLPRHFPVPASGPSRKHNDIGLLSWHRSSP.

An N-terminal signal peptide occupies residues 1 to 35 (MSSRNQRSRITSSFFVSFFTRTILLLLILLLGFCN). The disordered stretch occupies residues 75-95 (ASGPSRKHNDIGLLSWHRSSP).

Expressed in leaves, buds, flowers, seedlings and seeds. Detected at the base of pedicel, in the floral and funicule abscission zones and in vascular tissues.

Its subcellular location is the secreted. It is found in the extracellular space. May be involved in floral abscission. In Arabidopsis thaliana (Mouse-ear cress), this protein is Protein IDA-LIKE 2 (IDL2).